The chain runs to 157 residues: Protein Smg (157 aa).

The protein belongs to the Smg family.

The chain is Protein Smg from Shigella boydii serotype 18 (strain CDC 3083-94 / BS512).